Reading from the N-terminus, the 347-residue chain is Phenylalanine--tRNA ligase alpha subunit (347 aa).

Residue Glu-265 coordinates Mg(2+).

It belongs to the class-II aminoacyl-tRNA synthetase family. Phe-tRNA synthetase alpha subunit type 1 subfamily. In terms of assembly, tetramer of two alpha and two beta subunits. It depends on Mg(2+) as a cofactor.

It is found in the cytoplasm. It catalyses the reaction tRNA(Phe) + L-phenylalanine + ATP = L-phenylalanyl-tRNA(Phe) + AMP + diphosphate + H(+). The polypeptide is Phenylalanine--tRNA ligase alpha subunit (Mycolicibacterium vanbaalenii (strain DSM 7251 / JCM 13017 / BCRC 16820 / KCTC 9966 / NRRL B-24157 / PYR-1) (Mycobacterium vanbaalenii)).